Reading from the N-terminus, the 137-residue chain is Small ribosomal subunit protein uS9 (137 aa).

Residues 114–137 (DSRMKERKKPGLRGARRGVQFSKR) are disordered. A compositionally biased stretch (basic residues) spans 118-137 (KERKKPGLRGARRGVQFSKR).

This sequence belongs to the universal ribosomal protein uS9 family.

The polypeptide is Small ribosomal subunit protein uS9 (Rhodopirellula baltica (strain DSM 10527 / NCIMB 13988 / SH1)).